Here is an 896-residue protein sequence, read N- to C-terminus: MLSTLIKKMFGSRNERTLRRMEKSVMAINAFEPKMQALSNEELAGKTQEFKERFNNGESLDELLAEAFATVREVSLRTLGLRHFDVQLIGGMVLHEGNIAEMRTGEGKTLVATLPAYLNAISGRGVHIVTVNDYLAKRDSQWMKPIYEFLGLTVGVIYPDMSHKEKQEAYKADIVYGTNNEYGFDYLRDNMAFSLTDKVQRELNFAIVDEVDSILIDEARTPLIISGAAEDSSELYIKINSLIPQLKKQEEEGDEGDYTIDEKQKQAHLTDAGHLHIEELLTKAKLLDPGESLYHASNIMLMHHVNAALKAHAMFHRDIDYIVKDNQVVIVDEHTGRTMPGRRWSEGLHQAVEAKEGVPIQNENQTLASITFQNFFRMYNKLSGMTGTADTEAYEFQQIYNLEVVVIPTNRSMIRKDEADLVYLTQADKFQAIIEDVRECGVRRQPVLVGTVSIEASEFLSQLLKKENIKHQVLNAKFHEKEAQIIAEAGRPGAVTIATNMAGRGTDIVLGGSLAADLANLPADASEQEKEAVKKEWQKRHDEVIAAGGLRIIGSERHESRRIDNQLRGRAGRQGDPGSSRFYLSLEDNLMRIFASERVASMMRRLGMQPGEPIEHSLVTRAIENAQRKLEGHHFDVRKQLLDYDNVANDQRQVIYTQRSSIMAMTDTQEVVEMMREEVMDSLVDTYIPPQSLEDQWDPQALSDVLSDEFKIKAPVPDWIDKDHSIQPEKIKEKILALAIEHYDEKVRKVGRPVISQFEKSIILQTLDNHWREHLAAMDQLRQGIHLRGYAQKDPKQEYKKEAFSLFTMMLDNLKYEVIRILSSVEIQTEEDAHVVEEQRRADQIRKMNLMHESLSENDEASETQTFRRQEKKIGRNDPCPCGSGKKYKACHGSLV.

ATP contacts are provided by residues glutamine 87, 105–109 (GEGKT), and aspartate 507. The disordered stretch occupies residues 853 to 879 (ESLSENDEASETQTFRRQEKKIGRNDP). The segment covering 866–876 (TFRRQEKKIGR) has biased composition (basic and acidic residues). Zn(2+) contacts are provided by cysteine 880, cysteine 882, cysteine 891, and histidine 892.

This sequence belongs to the SecA family. As to quaternary structure, monomer and homodimer. Part of the essential Sec protein translocation apparatus which comprises SecA, SecYEG and auxiliary proteins SecDF-YajC and YidC. Requires Zn(2+) as cofactor.

It localises to the cell inner membrane. The protein resides in the cytoplasm. It catalyses the reaction ATP + H2O + cellular proteinSide 1 = ADP + phosphate + cellular proteinSide 2.. Its function is as follows. Part of the Sec protein translocase complex. Interacts with the SecYEG preprotein conducting channel. Has a central role in coupling the hydrolysis of ATP to the transfer of proteins into and across the cell membrane, serving both as a receptor for the preprotein-SecB complex and as an ATP-driven molecular motor driving the stepwise translocation of polypeptide chains across the membrane. This is Protein translocase subunit SecA from Legionella pneumophila subsp. pneumophila (strain Philadelphia 1 / ATCC 33152 / DSM 7513).